The sequence spans 308 residues: tRNA pseudouridine synthase B (308 aa).

Asp37 serves as the catalytic Nucleophile.

The protein belongs to the pseudouridine synthase TruB family. Type 1 subfamily.

The catalysed reaction is uridine(55) in tRNA = pseudouridine(55) in tRNA. Its function is as follows. Responsible for synthesis of pseudouridine from uracil-55 in the psi GC loop of transfer RNAs. The polypeptide is tRNA pseudouridine synthase B (Deinococcus radiodurans (strain ATCC 13939 / DSM 20539 / JCM 16871 / CCUG 27074 / LMG 4051 / NBRC 15346 / NCIMB 9279 / VKM B-1422 / R1)).